Reading from the N-terminus, the 105-residue chain is UPF0145 protein lpg0197 (105 aa).

Belongs to the UPF0145 family.

In Legionella pneumophila subsp. pneumophila (strain Philadelphia 1 / ATCC 33152 / DSM 7513), this protein is UPF0145 protein lpg0197.